Here is a 168-residue protein sequence, read N- to C-terminus: Phosphopantetheine adenylyltransferase (168 aa).

Thr13 lines the substrate pocket. Residues 13 to 14 (TF) and His21 contribute to the ATP site. Substrate-binding residues include Lys45, Leu78, and Arg92. ATP is bound by residues 93-95 (GLR), Glu103, and 128-134 (TQFISSS).

This sequence belongs to the bacterial CoaD family. In terms of assembly, homohexamer. It depends on Mg(2+) as a cofactor.

The protein localises to the cytoplasm. The enzyme catalyses (R)-4'-phosphopantetheine + ATP + H(+) = 3'-dephospho-CoA + diphosphate. Its pathway is cofactor biosynthesis; coenzyme A biosynthesis; CoA from (R)-pantothenate: step 4/5. Its function is as follows. Reversibly transfers an adenylyl group from ATP to 4'-phosphopantetheine, yielding dephospho-CoA (dPCoA) and pyrophosphate. The sequence is that of Phosphopantetheine adenylyltransferase from Wolbachia pipientis subsp. Culex pipiens (strain wPip).